A 575-amino-acid chain; its full sequence is Proline--tRNA ligase (575 aa).

It belongs to the class-II aminoacyl-tRNA synthetase family. ProS type 1 subfamily. In terms of assembly, homodimer.

It is found in the cytoplasm. It carries out the reaction tRNA(Pro) + L-proline + ATP = L-prolyl-tRNA(Pro) + AMP + diphosphate. Catalyzes the attachment of proline to tRNA(Pro) in a two-step reaction: proline is first activated by ATP to form Pro-AMP and then transferred to the acceptor end of tRNA(Pro). As ProRS can inadvertently accommodate and process non-cognate amino acids such as alanine and cysteine, to avoid such errors it has two additional distinct editing activities against alanine. One activity is designated as 'pretransfer' editing and involves the tRNA(Pro)-independent hydrolysis of activated Ala-AMP. The other activity is designated 'posttransfer' editing and involves deacylation of mischarged Ala-tRNA(Pro). The misacylated Cys-tRNA(Pro) is not edited by ProRS. In Pseudothermotoga lettingae (strain ATCC BAA-301 / DSM 14385 / NBRC 107922 / TMO) (Thermotoga lettingae), this protein is Proline--tRNA ligase.